We begin with the raw amino-acid sequence, 420 residues long: Glucose-1-phosphate adenylyltransferase (420 aa).

Residues tyrosine 107, glycine 172, 187–188 (EK), and serine 205 each bind alpha-D-glucose 1-phosphate.

The protein belongs to the bacterial/plant glucose-1-phosphate adenylyltransferase family. As to quaternary structure, homotetramer.

The enzyme catalyses alpha-D-glucose 1-phosphate + ATP + H(+) = ADP-alpha-D-glucose + diphosphate. It participates in glycan biosynthesis; glycogen biosynthesis. Functionally, involved in the biosynthesis of ADP-glucose, a building block required for the elongation reactions to produce glycogen. Catalyzes the reaction between ATP and alpha-D-glucose 1-phosphate (G1P) to produce pyrophosphate and ADP-Glc. This is Glucose-1-phosphate adenylyltransferase from Rhizobium johnstonii (strain DSM 114642 / LMG 32736 / 3841) (Rhizobium leguminosarum bv. viciae).